The primary structure comprises 286 residues: ATP synthase gamma chain (286 aa).

The protein belongs to the ATPase gamma chain family. In terms of assembly, F-type ATPases have 2 components, CF(1) - the catalytic core - and CF(0) - the membrane proton channel. CF(1) has five subunits: alpha(3), beta(3), gamma(1), delta(1), epsilon(1). CF(0) has three main subunits: a, b and c.

Its subcellular location is the cell inner membrane. Functionally, produces ATP from ADP in the presence of a proton gradient across the membrane. The gamma chain is believed to be important in regulating ATPase activity and the flow of protons through the CF(0) complex. This chain is ATP synthase gamma chain, found in Pseudomonas putida (strain W619).